Here is a 206-residue protein sequence, read N- to C-terminus: Large ribosomal subunit protein uL4 (206 aa).

Positions 48–78 (THSVKTRGHVSGGGAKPWRQKGTGRARAGSN) are disordered.

This sequence belongs to the universal ribosomal protein uL4 family. As to quaternary structure, part of the 50S ribosomal subunit.

Functionally, one of the primary rRNA binding proteins, this protein initially binds near the 5'-end of the 23S rRNA. It is important during the early stages of 50S assembly. It makes multiple contacts with different domains of the 23S rRNA in the assembled 50S subunit and ribosome. Its function is as follows. Forms part of the polypeptide exit tunnel. The chain is Large ribosomal subunit protein uL4 from Lawsonia intracellularis (strain PHE/MN1-00).